A 196-amino-acid chain; its full sequence is CASP-like protein 2U1 (196 aa).

Over 1–11 (MAPMECVRRRN) the chain is Cytoplasmic. Residues 12–32 (VGELVLRCAATLVCMLSLMLL) form a helical membrane-spanning segment. Topologically, residues 33-58 (VRDQQIAVQEVGVTSVTTQLRYSSST) are extracellular. Residues 59–79 (GLVYLVYANGLVALYCFVVVL) traverse the membrane as a helical segment. Over 80–95 (TSSFNGGSVMRRNKSG) the chain is Cytoplasmic. The chain crosses the membrane as a helical span at residues 96-116 (AWALFVLDQVLACILLSAASA). Residues 117 to 148 (ASEIAFLVEKGAKKTIWDSKCIVYGHFCRMLE) are Extracellular-facing. A helical membrane pass occupies residues 149 to 169 (VSIATSFIAVIMLGSICVLSA). The Cytoplasmic portion of the chain corresponds to 170–196 (KQLFQQYTHYARIVNMVKLKSTPNSLL).

It belongs to the Casparian strip membrane proteins (CASP) family. As to quaternary structure, homodimer and heterodimers.

It is found in the cell membrane. This chain is CASP-like protein 2U1, found in Pteridium aquilinum subsp. aquilinum (Bracken fern).